The primary structure comprises 63 residues: Beta-defensin 3 (63 aa).

Positions 1 to 20 (MRIHYLLFAFLLVLLSPPAA) are cleaved as a signal peptide. Positions 21–22 (FS) are excised as a propeptide. 3 cysteine pairs are disulfide-bonded: Cys31–Cys59, Cys38–Cys52, and Cys42–Cys60.

It belongs to the beta-defensin family. LAP/TAP subfamily. In terms of tissue distribution, highest expression in salivary glands, epididymis, ovary and pancreas and to a lesser extent in lung, liver and brain. Low or no expression in skeletal muscle and tongue.

The protein resides in the secreted. In terms of biological role, antimicrobial activity against Gram-negative bacteria E.coli and P.aeruginosa. This chain is Beta-defensin 3 (Defb3), found in Mus musculus (Mouse).